Here is a 268-residue protein sequence, read N- to C-terminus: Small ribosomal subunit protein uS10m (268 aa).

The transit peptide at 1-64 (MIIRPVVRSL…RITTTTEAPK (64 aa)) directs the protein to the mitochondrion.

It belongs to the universal ribosomal protein uS10 family. As to quaternary structure, component of the mitochondrial small ribosomal subunit (mt-SSU). Mature N.crassa 74S mitochondrial ribosomes consist of a small (37S) and a large (54S) subunit. The 37S small subunit contains a 16S ribosomal RNA (16S mt-rRNA) and 32 different proteins. The 54S large subunit contains a 23S rRNA (23S mt-rRNA) and 42 different proteins.

It is found in the mitochondrion. Its function is as follows. Component of the mitochondrial ribosome (mitoribosome), a dedicated translation machinery responsible for the synthesis of mitochondrial genome-encoded proteins, including at least some of the essential transmembrane subunits of the mitochondrial respiratory chain. The mitoribosomes are attached to the mitochondrial inner membrane and translation products are cotranslationally integrated into the membrane. The protein is Small ribosomal subunit protein uS10m (mrp-10) of Neurospora crassa (strain ATCC 24698 / 74-OR23-1A / CBS 708.71 / DSM 1257 / FGSC 987).